A 218-amino-acid chain; its full sequence is GTP cyclohydrolase 1 (218 aa).

Residues Cys-109, His-112, and Cys-180 each contribute to the Zn(2+) site.

It belongs to the GTP cyclohydrolase I family. As to quaternary structure, toroid-shaped homodecamer, composed of two pentamers of five dimers.

The catalysed reaction is GTP + H2O = 7,8-dihydroneopterin 3'-triphosphate + formate + H(+). It participates in cofactor biosynthesis; 7,8-dihydroneopterin triphosphate biosynthesis; 7,8-dihydroneopterin triphosphate from GTP: step 1/1. In Aeromonas salmonicida (strain A449), this protein is GTP cyclohydrolase 1.